Here is a 324-residue protein sequence, read N- to C-terminus: Beta-ketoacyl-[acyl-carrier-protein] synthase III (324 aa).

Catalysis depends on residues C112 and H249. The tract at residues 250 to 254 (QANDR) is ACP-binding. N279 is a catalytic residue.

The protein belongs to the thiolase-like superfamily. FabH family. As to quaternary structure, homodimer.

Its subcellular location is the cytoplasm. It catalyses the reaction malonyl-[ACP] + acetyl-CoA + H(+) = 3-oxobutanoyl-[ACP] + CO2 + CoA. It participates in lipid metabolism; fatty acid biosynthesis. Its function is as follows. Catalyzes the condensation reaction of fatty acid synthesis by the addition to an acyl acceptor of two carbons from malonyl-ACP. Catalyzes the first condensation reaction which initiates fatty acid synthesis and may therefore play a role in governing the total rate of fatty acid production. Possesses both acetoacetyl-ACP synthase and acetyl transacylase activities. Its substrate specificity determines the biosynthesis of branched-chain and/or straight-chain of fatty acids. The protein is Beta-ketoacyl-[acyl-carrier-protein] synthase III of Streptococcus pneumoniae serotype 19F (strain G54).